We begin with the raw amino-acid sequence, 89 residues long: Small cysteine-rich protein 1 (89 aa).

The first 20 residues, 1-20 (MDVRFRLCLFLVILVIVANA), serve as a signal peptide directing secretion. Residues 21-27 (NVIKEPE) constitute a propeptide that is removed on maturation.

It belongs to the Cnidaria small cysteine-rich protein (SCRiP) family. gamma subfamily. Contains 4 disulfide bonds.

Its subcellular location is the secreted. The protein localises to the nematocyst. Its function is as follows. Induces neurotoxic symptoms on zebrafish. Has also been claimed to be implied in calcification, but tests on homolog proteins suggest that proteins of this family have a neurotoxic function and not a calcification function. The chain is Small cysteine-rich protein 1 from Acropora millepora (Staghorn coral).